We begin with the raw amino-acid sequence, 341 residues long: Elongation factor Ts (341 aa).

Residues 80 to 83 (TDFV) form an involved in Mg(2+) ion dislocation from EF-Tu region.

Belongs to the EF-Ts family.

It is found in the cytoplasm. Functionally, associates with the EF-Tu.GDP complex and induces the exchange of GDP to GTP. It remains bound to the aminoacyl-tRNA.EF-Tu.GTP complex up to the GTP hydrolysis stage on the ribosome. The sequence is that of Elongation factor Ts from Lactobacillus acidophilus (strain ATCC 700396 / NCK56 / N2 / NCFM).